The chain runs to 447 residues: UDP-N-acetylmuramate--L-alanine ligase (447 aa).

108 to 114 (GSHGKTS) contacts ATP.

It belongs to the MurCDEF family.

It localises to the cytoplasm. It carries out the reaction UDP-N-acetyl-alpha-D-muramate + L-alanine + ATP = UDP-N-acetyl-alpha-D-muramoyl-L-alanine + ADP + phosphate + H(+). Its pathway is cell wall biogenesis; peptidoglycan biosynthesis. Its function is as follows. Cell wall formation. This chain is UDP-N-acetylmuramate--L-alanine ligase, found in Listeria monocytogenes serovar 1/2a (strain ATCC BAA-679 / EGD-e).